The following is a 37-amino-acid chain: Hemocyanin subunit B (37 aa).

The protein belongs to the tyrosinase family. Hemocyanin subfamily. Hemolymph.

Its subcellular location is the secreted. It is found in the extracellular space. Functionally, hemocyanins are copper-containing oxygen carriers occurring freely dissolved in the hemolymph of many mollusks and arthropods. In Cancer pagurus (Rock crab), this protein is Hemocyanin subunit B.